Reading from the N-terminus, the 43-residue chain is MDSATVLSIGIAVVVIAVTGFSIYTAFGPPSVELEDPFEDHED.

Residues 7-27 (LSIGIAVVVIAVTGFSIYTAF) form a helical membrane-spanning segment.

This sequence belongs to the PsbN family.

It is found in the cellular thylakoid membrane. Its function is as follows. May play a role in photosystem I and II biogenesis. In Picosynechococcus sp. (strain ATCC 27264 / PCC 7002 / PR-6) (Agmenellum quadruplicatum), this protein is Protein PsbN.